The primary structure comprises 283 residues: Thymidylate synthase (283 aa).

Residue Arg-22 coordinates dUMP. Cys-160 functions as the Nucleophile in the catalytic mechanism. Residues 180-183, Asn-191, and 221-223 each bind dUMP; these read RSCD and HIY. Position 183 (Asp-183) interacts with (6R)-5,10-methylene-5,6,7,8-tetrahydrofolate. Ala-282 lines the (6R)-5,10-methylene-5,6,7,8-tetrahydrofolate pocket.

Belongs to the thymidylate synthase family. Bacterial-type ThyA subfamily. As to quaternary structure, homodimer.

It localises to the cytoplasm. It carries out the reaction dUMP + (6R)-5,10-methylene-5,6,7,8-tetrahydrofolate = 7,8-dihydrofolate + dTMP. It functions in the pathway pyrimidine metabolism; dTTP biosynthesis. Functionally, catalyzes the reductive methylation of 2'-deoxyuridine-5'-monophosphate (dUMP) to 2'-deoxythymidine-5'-monophosphate (dTMP) while utilizing 5,10-methylenetetrahydrofolate (mTHF) as the methyl donor and reductant in the reaction, yielding dihydrofolate (DHF) as a by-product. This enzymatic reaction provides an intracellular de novo source of dTMP, an essential precursor for DNA biosynthesis. The protein is Thymidylate synthase of Colwellia psychrerythraea (strain 34H / ATCC BAA-681) (Vibrio psychroerythus).